The sequence spans 321 residues: Probable 2-oxoglutarate-dependent dioxygenase AOP1.2 (321 aa).

Residues T165–P270 form the Fe2OG dioxygenase domain. The Fe cation site is built by H194, D196, and H251. R261 provides a ligand contact to 2-oxoglutarate.

The protein belongs to the iron/ascorbate-dependent oxidoreductase family. Fe(2+) serves as cofactor.

Functionally, probable 2-oxoglutarate-dependent dioxygenase that may be involved in glucosinolates biosynthesis. May play a role in the production of aliphatic glucosinolates. The chain is Probable 2-oxoglutarate-dependent dioxygenase AOP1.2 (AOP1.2) from Arabidopsis thaliana (Mouse-ear cress).